The chain runs to 196 residues: Pyroglutamyl-peptidase 1-like protein (196 aa).

Residues glutamate 65, cysteine 127, and histidine 146 contribute to the active site.

The protein belongs to the peptidase C15 family.

This is Pyroglutamyl-peptidase 1-like protein (PGPEP1L) from Homo sapiens (Human).